Consider the following 130-residue polypeptide: Small ribosomal subunit protein uS11c (130 aa).

It belongs to the universal ribosomal protein uS11 family. As to quaternary structure, part of the 30S ribosomal subunit.

It is found in the plastid. The protein localises to the chloroplast. The protein is Small ribosomal subunit protein uS11c of Oedogonium cardiacum (Filamentous green alga).